A 109-amino-acid chain; its full sequence is uncharacterized protein (109 aa).

This is an uncharacterized protein from Autographa californica nuclear polyhedrosis virus (AcMNPV).